Reading from the N-terminus, the 73-residue chain is Translation initiation factor IF-1 (73 aa).

Residues 1–73 (MAKKDGVIEI…TRGRIVYRYK (73 aa)) form the S1-like domain.

It belongs to the IF-1 family. In terms of assembly, component of the 30S ribosomal translation pre-initiation complex which assembles on the 30S ribosome in the order IF-2 and IF-3, IF-1 and N-formylmethionyl-tRNA(fMet); mRNA recruitment can occur at any time during PIC assembly.

It is found in the cytoplasm. Its function is as follows. One of the essential components for the initiation of protein synthesis. Stabilizes the binding of IF-2 and IF-3 on the 30S subunit to which N-formylmethionyl-tRNA(fMet) subsequently binds. Helps modulate mRNA selection, yielding the 30S pre-initiation complex (PIC). Upon addition of the 50S ribosomal subunit IF-1, IF-2 and IF-3 are released leaving the mature 70S translation initiation complex. The polypeptide is Translation initiation factor IF-1 (Arthrobacter sp. (strain FB24)).